The primary structure comprises 172 residues: Translationally-controlled tumor protein homolog (172 aa).

Residues 1 to 172 (MIIYKDCITE…FKDGLIIEKC (172 aa)) form the TCTP domain.

Belongs to the TCTP family.

Its subcellular location is the cytoplasm. Its function is as follows. Involved in calcium binding and microtubule stabilization. The sequence is that of Translationally-controlled tumor protein homolog (tpt1) from Xenopus laevis (African clawed frog).